The sequence spans 417 residues: D-inositol 3-phosphate glycosyltransferase (417 aa).

Histidine 15 contacts 1D-myo-inositol 3-phosphate. Residues 21 to 22 (QP) and glycine 29 contribute to the UDP-N-acetyl-alpha-D-glucosamine site. 1D-myo-inositol 3-phosphate contacts are provided by residues 26-31 (DAGGMN), lysine 84, tyrosine 117, threonine 141, and arginine 161. Positions 241, 246, and 299 each coordinate UDP-N-acetyl-alpha-D-glucosamine. The Mg(2+) site is built by tyrosine 308, arginine 309, and alanine 311. Positions 321 and 329 each coordinate UDP-N-acetyl-alpha-D-glucosamine. Threonine 335 contacts Mg(2+).

Belongs to the glycosyltransferase group 1 family. MshA subfamily. Homodimer.

The catalysed reaction is 1D-myo-inositol 3-phosphate + UDP-N-acetyl-alpha-D-glucosamine = 1D-myo-inositol 2-acetamido-2-deoxy-alpha-D-glucopyranoside 3-phosphate + UDP + H(+). In terms of biological role, catalyzes the transfer of a N-acetyl-glucosamine moiety to 1D-myo-inositol 3-phosphate to produce 1D-myo-inositol 2-acetamido-2-deoxy-glucopyranoside 3-phosphate in the mycothiol biosynthesis pathway. The polypeptide is D-inositol 3-phosphate glycosyltransferase (Xylanimonas cellulosilytica (strain DSM 15894 / JCM 12276 / CECT 5975 / KCTC 9989 / LMG 20990 / NBRC 107835 / XIL07)).